Reading from the N-terminus, the 452-residue chain is Phosphatidylinositol N-acetylglucosaminyltransferase GPI3 subunit (452 aa).

The helical transmembrane segment at 407 to 427 (LYLLCGIVEYMLFFLLEWLYP) threads the bilayer.

Belongs to the glycosyltransferase group 1 family. As to quaternary structure, component of the phosphatidylinositol N-acetylglucosaminyltransferase complex composed of at least GPI1, GPI2, GPI3, GPI15, GPI19 and ERI1.

The protein localises to the endoplasmic reticulum membrane. It carries out the reaction a 1,2-diacyl-sn-glycero-3-phospho-(1D-myo-inositol) + UDP-N-acetyl-alpha-D-glucosamine = a 6-(N-acetyl-alpha-D-glucosaminyl)-1-(1,2-diacyl-sn-glycero-3-phospho)-1D-myo-inositol + UDP + H(+). The protein operates within glycolipid biosynthesis; glycosylphosphatidylinositol-anchor biosynthesis. Its activity is regulated as follows. Inhibited by Ras, probably via the interaction between RAS2 and ERI1. Its function is as follows. Catalytic subunit in the complex catalyzing the transfer of N-acetylglucosamine from UDP-N-acetylglucosamine to phosphatidylinositol, the first step of GPI biosynthesis. The protein is Phosphatidylinositol N-acetylglucosaminyltransferase GPI3 subunit (SPT14) of Saccharomyces cerevisiae (strain RM11-1a) (Baker's yeast).